A 277-amino-acid polypeptide reads, in one-letter code: SF-assemblin (277 aa).

Residues 1-20 (MATSGMVSPTSGRPFSPMRS) form a disordered region. Positions 1–27 (MATSGMVSPTSGRPFSPMRSSVLTTTG) are nonhelical region. Residues 28–277 (SAIKLEHVSE…KMVNMQHNSA (250 aa)) are rod. Residues 70–90 (RLEKSMEAEVKRRAESDKQLQ) are a coiled coil.

The protein belongs to the SF-assemblin family. In terms of processing, the N-terminus is blocked.

The protein localises to the cytoplasm. Its subcellular location is the cytoskeleton. Functionally, major component of the striated microtubule-associated fibers (SMAFs; system-I-fibers). This chain is SF-assemblin, found in Dunaliella bioculata (Green alga).